Here is a 97-residue protein sequence, read N- to C-terminus: M-zodatoxin-Lt7a (97 aa).

An N-terminal signal peptide occupies residues 1 to 22 (MKFYVVALALLVAFVCIAESRS). Residues 23–63 (VETERAVDADLEDDLDDLEEYLEGIAEALELEDFPDTEEAR) constitute a propeptide that is removed on maturation. The short motif at 60-63 (EEAR) is the Processing quadruplet motif element.

Cleavage of the propeptide depends on the processing quadruplet motif (XXXR, with at least one of X being E). As to expression, expressed by the venom gland.

The protein localises to the secreted. Functionally, does not have antimicrobial or antifungal activity. Does not have hemolytic activity against rabbit erythrocytes. However, it causes some conductance changes in planar bilayer membranes, without membrane rupture, suggesting a cytolytic function on other biological targets. It causes paralysis, but is not lethal when injected into insect (M.domestica) larvae. The protein is M-zodatoxin-Lt7a of Lachesana tarabaevi (Spider).